Here is a 258-residue protein sequence, read N- to C-terminus: 5-oxoprolinase subunit A (258 aa).

The protein belongs to the LamB/PxpA family. Forms a complex composed of PxpA, PxpB and PxpC.

The enzyme catalyses 5-oxo-L-proline + ATP + 2 H2O = L-glutamate + ADP + phosphate + H(+). In terms of biological role, catalyzes the cleavage of 5-oxoproline to form L-glutamate coupled to the hydrolysis of ATP to ADP and inorganic phosphate. This chain is 5-oxoprolinase subunit A, found in Corynebacterium jeikeium (strain K411).